Reading from the N-terminus, the 235-residue chain is MFDVTILTIFPEMFPGFLNYSLAGKALEKKIWNLQVINIRFFAKDRHLTVDHIPYGGGAGMIMRPDVVGDAVDSVLSTHKDTKFIYMTPSGTKFDQSIARELVGFPHITILCGRFEGIDQRVIDEYTPYELSIGDYILSGGEPAAMVILDVCVRLLPGVVNNSGSITEESFSYSGGVLEYPQYTRPKQWRKHRVPKILLSGNHKKISDWRQKQSQVITKRRRPELLDGEINDKFT.

S-adenosyl-L-methionine is bound by residues glycine 113 and 133–138; that span reads IGDYIL.

It belongs to the RNA methyltransferase TrmD family. Homodimer.

The protein resides in the cytoplasm. The catalysed reaction is guanosine(37) in tRNA + S-adenosyl-L-methionine = N(1)-methylguanosine(37) in tRNA + S-adenosyl-L-homocysteine + H(+). Specifically methylates guanosine-37 in various tRNAs. In Wolbachia sp. subsp. Brugia malayi (strain TRS), this protein is tRNA (guanine-N(1)-)-methyltransferase.